The primary structure comprises 896 residues: DNA mismatch repair protein MutS (896 aa).

Residue 607–614 participates in ATP binding; sequence GPNMSGKS. The segment at 809-835 is disordered; that stretch reads ANSVAPNTAASMPVEAADESQPVESET.

This sequence belongs to the DNA mismatch repair MutS family.

In terms of biological role, this protein is involved in the repair of mismatches in DNA. It is possible that it carries out the mismatch recognition step. This protein has a weak ATPase activity. This is DNA mismatch repair protein MutS from Lactiplantibacillus plantarum (strain ATCC BAA-793 / NCIMB 8826 / WCFS1) (Lactobacillus plantarum).